We begin with the raw amino-acid sequence, 178 residues long: Fatty-acid and retinol-binding protein 1 (178 aa).

Positions 1–16 are cleaved as a signal peptide; that stretch reads MYHQLILMALIGVIMA. 2 coiled-coil regions span residues 67–89 and 122–154; these read DAALEALKNKSDKLYQKAVELRN and QKLDMEKLKQAARDIIAKYEALNEETKEELKAT.

Belongs to the fatty-acid and retinol-binding protein (FARBP) family. In terms of processing, not glycosylated.

The protein resides in the secreted. In terms of biological role, binds retinol and different fatty acids. This is Fatty-acid and retinol-binding protein 1 from Litomosoides sigmodontis (Filarial nematode worm).